A 321-amino-acid polypeptide reads, in one-letter code: MTSKLEQLRAITTVVADTGDIEAVARLKPVDCTTNPTIVLKALGTPAFADAVKEAVAWGRKQGGQSDAVVAAVADRLAISVGAALAGLVPGRVSTEVDADLSFDTQASITKARHIIASYKERGIERERILIKLASTWEGIKAAEVLQSEGIDCNLTLLFSQAQAIACAEAKAFLISPFVGRILDWYKKSTGETYTAETDPGVVSVRSIYNYYKANGIGTVVMGASFRNVGEIEALAGCDRLTISPALLEELDKDNGKLERKLSPDNVKAEALQSLDEKAFRWAMNEDAMATEKLSEGIRLFAKDLVTLREMVRKELTAAAA.

The active-site Schiff-base intermediate with substrate is Lys-132.

The protein belongs to the transaldolase family. Type 1 subfamily. Homodimer.

The protein localises to the cytoplasm. It carries out the reaction D-sedoheptulose 7-phosphate + D-glyceraldehyde 3-phosphate = D-erythrose 4-phosphate + beta-D-fructose 6-phosphate. The protein operates within carbohydrate degradation; pentose phosphate pathway; D-glyceraldehyde 3-phosphate and beta-D-fructose 6-phosphate from D-ribose 5-phosphate and D-xylulose 5-phosphate (non-oxidative stage): step 2/3. Its function is as follows. Transaldolase is important for the balance of metabolites in the pentose-phosphate pathway. This chain is Transaldolase, found in Agrobacterium fabrum (strain C58 / ATCC 33970) (Agrobacterium tumefaciens (strain C58)).